The following is a 458-amino-acid chain: MTSKADYLKKYLSPASGDIEKKKKKKNKDKNKPSGLRLIEEDAFLSVDAAKTRDIGSDEEREEIEVLKQSVKKAKVVHGFKQTFAEVDAPKVIKPEPLSPDNSPPRGKRQRHDSDNSPPRPSRKRNDSDNSPPRPSRNRHDSDKDNSPPRRRRHDSDNSPPRPSRKIREESPSARNRRSPPRTRRDRHDSDNSPPRNRSRRDSDNSPPRRRPSSPARRRKDDDLSPPRKSRKIEEPKKIKKEEPDSDTETSGRTLEGKRSGLQSARDLKEESDKLRAKNSKMFEEMDTSVSGRFADTVYRQKQTKKKGKDSEEDQAKKERETKKTEELKEKYKSWNKGVAQIEDRRAQLEEMARVAAEPMARARDDDAMNAHLKEVLHAADPMANMIQKKRRDTAIDRGELVYPSYHGHFVPNRFGIAPGYRWDGVDRSNGFEGKLAKTENTKTANQSEYYKSIAEYE.

Disordered regions lie at residues 16–37, 81–328, and 437–458; these read SGDIEKKKKKKNKDKNKPSGLR, KQTF…TEEL, and AKTENTKTANQSEYYKSIAEYE. Over residues 138–148 the composition is skewed to basic and acidic residues; it reads NRHDSDKDNSP. Basic residues-rich tracts occupy residues 175–185 and 208–218; these read RNRRSPPRTRR and PRRRPSSPARR. Basic and acidic residues-rich tracts occupy residues 219 to 243, 266 to 284, and 314 to 328; these read RKDDDLSPPRKSRKIEEPKKIKKEE, RDLKEESDKLRAKNSKMFE, and DQAKKERETKKTEEL. A coiled-coil region spans residues 262-356; sequence LQSARDLKEE…AQLEEMARVA (95 aa).

This sequence belongs to the CWC26 family.

The protein is BUD13 homolog of Caenorhabditis elegans.